We begin with the raw amino-acid sequence, 1099 residues long: Exonuclease/helicase subunit RexB (1099 aa).

[4Fe-4S] cluster-binding residues include C766, C1056, C1059, and C1065.

This sequence belongs to the helicase family. AddB/RexB type 2 subfamily. Heterodimer of RexA (AddA) and RexB. Mg(2+) serves as cofactor. It depends on [4Fe-4S] cluster as a cofactor.

Functionally, the heterodimer acts both as an ATP-dependent DNA helicase and an ATP-dependent, dual-direction single-stranded exonuclease. Recognizes the L.lactis chi site (5'-GCGCGTG-3'), which stimulates homologous recombination. This subunit has 5'-&gt;3' exonuclease activity. In terms of biological role, the heterodimer acts as both an ATP-dependent DNA helicase and an ATP-dependent, dual-direction single-stranded exonuclease. Recognizes the chi site generating a DNA molecule suitable for the initiation of homologous recombination. This subunit has 5' -&gt; 3' nuclease activity but not helicase activity. The chain is Exonuclease/helicase subunit RexB from Lactococcus lactis subsp. cremoris (strain MG1363).